We begin with the raw amino-acid sequence, 229 residues long: 5'-methylthioadenosine/S-adenosylhomocysteine nucleosidase (229 aa).

Catalysis depends on glutamate 12, which acts as the Proton acceptor. Substrate is bound by residues glycine 78, isoleucine 152, and 173-174; that span reads ME. Residue aspartate 197 is the Proton donor of the active site.

Belongs to the PNP/UDP phosphorylase family. MtnN subfamily.

It catalyses the reaction S-adenosyl-L-homocysteine + H2O = S-(5-deoxy-D-ribos-5-yl)-L-homocysteine + adenine. The enzyme catalyses S-methyl-5'-thioadenosine + H2O = 5-(methylsulfanyl)-D-ribose + adenine. It carries out the reaction 5'-deoxyadenosine + H2O = 5-deoxy-D-ribose + adenine. The protein operates within amino-acid biosynthesis; L-methionine biosynthesis via salvage pathway; S-methyl-5-thio-alpha-D-ribose 1-phosphate from S-methyl-5'-thioadenosine (hydrolase route): step 1/2. Functionally, catalyzes the irreversible cleavage of the glycosidic bond in both 5'-methylthioadenosine (MTA) and S-adenosylhomocysteine (SAH/AdoHcy) to adenine and the corresponding thioribose, 5'-methylthioribose and S-ribosylhomocysteine, respectively. Also cleaves 5'-deoxyadenosine, a toxic by-product of radical S-adenosylmethionine (SAM) enzymes, into 5-deoxyribose and adenine. The polypeptide is 5'-methylthioadenosine/S-adenosylhomocysteine nucleosidase (Haemophilus influenzae (strain PittEE)).